The following is a 447-amino-acid chain: 23S rRNA (uracil(1939)-C(5))-methyltransferase RlmD (447 aa).

The TRAM domain occupies 7–66 (RKPLSQEPQKASIEALTHEGRGIAHVAGKTVFIDGALPGETVWFHYLRRRGKFDEGRVLE). Residues cysteine 79, cysteine 85, cysteine 88, and cysteine 168 each coordinate [4Fe-4S] cluster. Residues glutamine 275, phenylalanine 304, asparagine 309, glutamate 325, aspartate 352, and aspartate 374 each coordinate S-adenosyl-L-methionine. The Nucleophile role is filled by cysteine 400.

The protein belongs to the class I-like SAM-binding methyltransferase superfamily. RNA M5U methyltransferase family. RlmD subfamily.

It catalyses the reaction uridine(1939) in 23S rRNA + S-adenosyl-L-methionine = 5-methyluridine(1939) in 23S rRNA + S-adenosyl-L-homocysteine + H(+). Functionally, catalyzes the formation of 5-methyl-uridine at position 1939 (m5U1939) in 23S rRNA. The polypeptide is 23S rRNA (uracil(1939)-C(5))-methyltransferase RlmD (Nitrosococcus oceani (strain ATCC 19707 / BCRC 17464 / JCM 30415 / NCIMB 11848 / C-107)).